The primary structure comprises 392 residues: Queuine tRNA-ribosyltransferase (392 aa).

The Proton acceptor role is filled by aspartate 93. Substrate is bound by residues 93–97 (DSGGY), aspartate 147, glutamine 189, and glycine 216. The tract at residues 247-253 (GVGAPED) is RNA binding. Catalysis depends on aspartate 266, which acts as the Nucleophile. The RNA binding; important for wobble base 34 recognition stretch occupies residues 271 to 275 (TRVAR). Residues cysteine 304, cysteine 306, cysteine 309, and histidine 335 each coordinate Zn(2+).

The protein belongs to the queuine tRNA-ribosyltransferase family. As to quaternary structure, homodimer. Within each dimer, one monomer is responsible for RNA recognition and catalysis, while the other monomer binds to the replacement base PreQ1. Zn(2+) serves as cofactor.

The enzyme catalyses 7-aminomethyl-7-carbaguanine + guanosine(34) in tRNA = 7-aminomethyl-7-carbaguanosine(34) in tRNA + guanine. Its pathway is tRNA modification; tRNA-queuosine biosynthesis. In terms of biological role, catalyzes the base-exchange of a guanine (G) residue with the queuine precursor 7-aminomethyl-7-deazaguanine (PreQ1) at position 34 (anticodon wobble position) in tRNAs with GU(N) anticodons (tRNA-Asp, -Asn, -His and -Tyr). Catalysis occurs through a double-displacement mechanism. The nucleophile active site attacks the C1' of nucleotide 34 to detach the guanine base from the RNA, forming a covalent enzyme-RNA intermediate. The proton acceptor active site deprotonates the incoming PreQ1, allowing a nucleophilic attack on the C1' of the ribose to form the product. After dissociation, two additional enzymatic reactions on the tRNA convert PreQ1 to queuine (Q), resulting in the hypermodified nucleoside queuosine (7-(((4,5-cis-dihydroxy-2-cyclopenten-1-yl)amino)methyl)-7-deazaguanosine). The sequence is that of Queuine tRNA-ribosyltransferase from Dehalococcoides mccartyi (strain ATCC BAA-2100 / JCM 16839 / KCTC 5957 / BAV1).